Consider the following 192-residue polypeptide: Chromophore lyase CpcS/CpeS 2 (192 aa).

The protein belongs to the CpcS/CpeS biliprotein lyase family.

Covalently attaches a chromophore to Cys residue(s) of phycobiliproteins. This is Chromophore lyase CpcS/CpeS 2 from Synechocystis sp. (strain ATCC 27184 / PCC 6803 / Kazusa).